Reading from the N-terminus, the 2053-residue chain is Integrator complex subunit 1 (2053 aa).

Disordered regions lie at residues 36-58 (KILP…ALAS) and 249-285 (SLPS…ESEP). Over residues 268–283 (DNSTQSLDASPLNTES) the composition is skewed to polar residues. Residues 708 to 728 (LAIIAFYWKAWLILLMISAHN) form a helical membrane-spanning segment.

The protein belongs to the Integrator subunit 1 family. Belongs to the multiprotein complex Integrator, at least composed of IntS1, IntS2, IntS3, IntS4, omd/IntS5, IntS6, defl/IntS7, IntS8, IntS9, IntS10, IntS11, IntS12, asun/IntS13, IntS14 and IntS15. The core complex associates with protein phosphatase 2A subunits mts/PP2A and Pp2A-29B, to form the Integrator-PP2A (INTAC) complex. Within the complex, interacts with IntS12 and IntS9. Interaction with IntS12 is likely to be important for promoting 3'-end processing of snRNAs. Interacts with Mediator complex members Cdk8 and CycC.

Its subcellular location is the nucleus membrane. It is found in the nucleus. Functionally, component of the integrator complex, a multiprotein complex that terminates RNA polymerase II (Pol II) transcription in the promoter-proximal region of genes. The integrator complex provides a quality checkpoint during transcription elongation by driving premature transcription termination of transcripts that are unfavorably configured for transcriptional elongation: the complex terminates transcription by (1) catalyzing dephosphorylation of the C-terminal domain (CTD) of Pol II subunit Polr2A/Rbp1 and Spt5, and (2) degrading the exiting nascent RNA transcript via endonuclease activity. The integrator complex is also involved in the 3'-end processing of the U7 snRNA, and also the spliceosomal snRNAs U1, U2, U4 and U5. Required for the normal expression of the Integrator complex component IntS12. In Drosophila melanogaster (Fruit fly), this protein is Integrator complex subunit 1.